A 213-amino-acid polypeptide reads, in one-letter code: uncharacterized protein (213 aa).

Residues Gly-53, Glu-74, and Asp-96 each coordinate S-adenosyl-L-methionine.

This sequence belongs to the methyltransferase superfamily. YrrT family.

Could be a S-adenosyl-L-methionine-dependent methyltransferase. This is an uncharacterized protein from Bacillus pumilus (strain SAFR-032).